The sequence spans 1388 residues: ABC transporter G family member 52 (1388 aa).

A disordered region spans residues 1–24 (MDDAGEICSFSRSSSSAREDDEED). In terms of domain architecture, ABC transporter 1 spans 135–406 (TNALCITKKI…FKSVGFKCPE (272 aa)). 168-175 (GPPGSGKT) is an ATP binding site. One can recognise an ABC transmembrane type-2 1 domain in the interval 484–697 (ELLKANIYRE…ALNALAVNEF (214 aa)). A run of 7 helical transmembrane segments spans residues 503 to 523 (LYIFKAIQLKLVAINAMTVFI), 541 to 561 (ALFYGMMMIVYSALAEMGPAI), 590 to 610 (IPISFLNTTVWVFLTYYVIGF), 621 to 641 (FLVLFVLCEVIYALFRFIVAL), 646 to 666 (VIASNMGPFCILIFMLSCGFI), 675 to 695 (WWIWLYWISPLMYALNALAVN), and 732 to 752 (ISIGALLGYVLLFNVLYTICL). The region spanning 791–1043 (ITFEDIRYSV…ELIKYFEAIQ (253 aa)) is the ABC transporter 2 domain. 836-843 (GVSGAGKT) contributes to the ATP binding site. Residues 1116 to 1330 (TQWLACLWKQ…TLNGLLTSQF (215 aa)) enclose the ABC transmembrane type-2 2 domain. The next 7 helical transmembrane spans lie at 1136–1156 (IVVRYLFTIVVALLFGTMFWG), 1167–1183 (LFSIMGAMYSACMAMGV), 1223–1243 (FPYIFLQTIIYCVLVYAMVGY), 1250–1270 (FLWYLFFMFFTLSYFTFYGMM), 1280–1300 (MSAVVSTAFYNIWNLFSGFLI), 1305–1325 (IPVWWRWYYWMCPVAWTLNGL), and 1357–1377 (LLWVAAVAVVSFAILFAFLFG).

The protein belongs to the ABC transporter superfamily. ABCG family. PDR (TC 3.A.1.205) subfamily.

The protein localises to the membrane. Its function is as follows. May be a general defense protein. This is ABC transporter G family member 52 from Oryza sativa subsp. japonica (Rice).